A 184-amino-acid polypeptide reads, in one-letter code: Mediator of RNA polymerase II transcription subunit 28 (184 aa).

The stretch at 77-105 (LLKEENFDLKQEIARKDELIRKHYEKIES) forms a coiled coil.

Belongs to the Mediator complex subunit 28 family. Component of the Mediator complex.

Its subcellular location is the nucleus. Component of the Mediator complex, a coactivator involved in the regulated transcription of nearly all RNA polymerase II-dependent genes. Mediator functions as a bridge to convey information from gene-specific regulatory proteins to the basal RNA polymerase II transcription machinery. Mediator is recruited to promoters by direct interactions with regulatory proteins and serves as a scaffold for the assembly of a functional preinitiation complex with RNA polymerase II and the general transcription factors. This Aedes aegypti (Yellowfever mosquito) protein is Mediator of RNA polymerase II transcription subunit 28 (MED28).